The following is a 240-amino-acid chain: METEKKNSKEVALKHLAFVRIATIHILASVSNLYEYAKQNSGPLKSAVEKVEGAVTTVVTPVYQKFKDVPDSLLVFLDHKVGEVSYKFDEHAPPMAKKVVNQAHVLIYKATEKAQSFVKEARTGGPKAAFNYAATEYKFFVVTNSVKVWAKLNQYKPIHAMGDKALPVAAHFSSRYNDLVTDMTNMGYSLVGYLPLVPVDDIVKAYEKEDARRKKGGDTAGKKGETTDAADGDKSSSDSE.

The disordered stretch occupies residues 208-240 (KEDARRKKGGDTAGKKGETTDAADGDKSSSDSE).

This sequence belongs to the REF/SRPP family.

The protein is REF/SRPP-like protein At1g67360 of Arabidopsis thaliana (Mouse-ear cress).